The following is a 33-amino-acid chain: uncharacterized protein (33 aa).

This is an uncharacterized protein from Archaeoglobus fulgidus (strain ATCC 49558 / DSM 4304 / JCM 9628 / NBRC 100126 / VC-16).